The following is a 320-amino-acid chain: uncharacterized protein (320 aa).

This sequence belongs to the NAD(P)-dependent epimerase/dehydratase family.

This is an uncharacterized protein from Staphylococcus saprophyticus subsp. saprophyticus (strain ATCC 15305 / DSM 20229 / NCIMB 8711 / NCTC 7292 / S-41).